Reading from the N-terminus, the 211-residue chain is Thiamine-phosphate synthase (211 aa).

4-amino-2-methyl-5-(diphosphooxymethyl)pyrimidine is bound by residues 37–41 (QLRIK) and Asn69. Residues Asp70 and Asp89 each contribute to the Mg(2+) site. Ser108 lines the 4-amino-2-methyl-5-(diphosphooxymethyl)pyrimidine pocket. 134–136 (TQT) serves as a coordination point for 2-[(2R,5Z)-2-carboxy-4-methylthiazol-5(2H)-ylidene]ethyl phosphate. Residue Lys137 coordinates 4-amino-2-methyl-5-(diphosphooxymethyl)pyrimidine. 2-[(2R,5Z)-2-carboxy-4-methylthiazol-5(2H)-ylidene]ethyl phosphate contacts are provided by residues Gly166 and 186 to 187 (VS).

This sequence belongs to the thiamine-phosphate synthase family. The cofactor is Mg(2+).

The catalysed reaction is 2-[(2R,5Z)-2-carboxy-4-methylthiazol-5(2H)-ylidene]ethyl phosphate + 4-amino-2-methyl-5-(diphosphooxymethyl)pyrimidine + 2 H(+) = thiamine phosphate + CO2 + diphosphate. The enzyme catalyses 2-(2-carboxy-4-methylthiazol-5-yl)ethyl phosphate + 4-amino-2-methyl-5-(diphosphooxymethyl)pyrimidine + 2 H(+) = thiamine phosphate + CO2 + diphosphate. It catalyses the reaction 4-methyl-5-(2-phosphooxyethyl)-thiazole + 4-amino-2-methyl-5-(diphosphooxymethyl)pyrimidine + H(+) = thiamine phosphate + diphosphate. The protein operates within cofactor biosynthesis; thiamine diphosphate biosynthesis; thiamine phosphate from 4-amino-2-methyl-5-diphosphomethylpyrimidine and 4-methyl-5-(2-phosphoethyl)-thiazole: step 1/1. Its function is as follows. Condenses 4-methyl-5-(beta-hydroxyethyl)thiazole monophosphate (THZ-P) and 2-methyl-4-amino-5-hydroxymethyl pyrimidine pyrophosphate (HMP-PP) to form thiamine monophosphate (TMP). In Klebsiella pneumoniae subsp. pneumoniae (strain ATCC 700721 / MGH 78578), this protein is Thiamine-phosphate synthase.